The chain runs to 456 residues: Histidine--tRNA ligase (456 aa).

Residues 1 to 11 (MTQNENPSAQS) are compositionally biased toward polar residues. Positions 1–22 (MTQNENPSAQSGAKPEDKARPA) are disordered.

The protein belongs to the class-II aminoacyl-tRNA synthetase family. As to quaternary structure, homodimer.

The protein resides in the cytoplasm. It carries out the reaction tRNA(His) + L-histidine + ATP = L-histidyl-tRNA(His) + AMP + diphosphate + H(+). This chain is Histidine--tRNA ligase, found in Cupriavidus pinatubonensis (strain JMP 134 / LMG 1197) (Cupriavidus necator (strain JMP 134)).